Reading from the N-terminus, the 277-residue chain is Large ribosomal subunit protein uL2 (277 aa).

A disordered region spans residues 219-277; sequence TVRGSVMNPNDHPHGGGEGRSPIGHPSPRTPWGKPALGYKTRKNKKYSDRFIVKRRHDK.

This sequence belongs to the universal ribosomal protein uL2 family. As to quaternary structure, part of the 50S ribosomal subunit. Forms a bridge to the 30S subunit in the 70S ribosome.

Its function is as follows. One of the primary rRNA binding proteins. Required for association of the 30S and 50S subunits to form the 70S ribosome, for tRNA binding and peptide bond formation. It has been suggested to have peptidyltransferase activity; this is somewhat controversial. Makes several contacts with the 16S rRNA in the 70S ribosome. This chain is Large ribosomal subunit protein uL2, found in Clostridium botulinum (strain 657 / Type Ba4).